The primary structure comprises 501 residues: Cobyric acid synthase (501 aa).

Residues Asp-252 to Trp-443 enclose the GATase cobBQ-type domain. The active-site Nucleophile is the Cys-333. The active site involves His-435.

The protein belongs to the CobB/CobQ family. CobQ subfamily.

Its pathway is cofactor biosynthesis; adenosylcobalamin biosynthesis. In terms of biological role, catalyzes amidations at positions B, D, E, and G on adenosylcobyrinic A,C-diamide. NH(2) groups are provided by glutamine, and one molecule of ATP is hydrogenolyzed for each amidation. This chain is Cobyric acid synthase, found in Limosilactobacillus reuteri (strain DSM 20016) (Lactobacillus reuteri).